The following is a 229-amino-acid chain: Potassium/proton antiporter CemA (229 aa).

The next 4 helical transmembrane spans lie at 7–27 (FNPL…SFSF), 107–127 (ILNF…YILG), 154–174 (ILLL…ELMI), and 189–209 (IISG…KYLI).

Belongs to the CemA family.

Its subcellular location is the plastid. The protein resides in the chloroplast inner membrane. It catalyses the reaction K(+)(in) + H(+)(out) = K(+)(out) + H(+)(in). Functionally, contributes to K(+)/H(+) antiport activity by supporting proton efflux to control proton extrusion and homeostasis in chloroplasts in a light-dependent manner to modulate photosynthesis. Prevents excessive induction of non-photochemical quenching (NPQ) under continuous-light conditions. Indirectly promotes efficient inorganic carbon uptake into chloroplasts. The sequence is that of Potassium/proton antiporter CemA from Ranunculus macranthus (Large buttercup).